The sequence spans 384 residues: Ferrochelatase, mitochondrial (384 aa).

C156 serves as a coordination point for [2Fe-2S] cluster. Residues H190 and N343 contribute to the active site. C363, C366, and C371 together coordinate [2Fe-2S] cluster.

The protein belongs to the ferrochelatase family. As to quaternary structure, homodimer. Homotetramer. [2Fe-2S] cluster serves as cofactor.

The protein resides in the mitochondrion inner membrane. It catalyses the reaction heme b + 2 H(+) = protoporphyrin IX + Fe(2+). It functions in the pathway porphyrin-containing compound metabolism; protoheme biosynthesis; protoheme from protoporphyrin-IX: step 1/1. In terms of biological role, catalyzes the ferrous insertion into protoporphyrin IX. Terminal enzyme in heme biosynthesis. Contains four conserved cysteines that function as cluster ligands and play a crucial role in maintaining protein structure. This is Ferrochelatase, mitochondrial from Drosophila melanogaster (Fruit fly).